A 115-amino-acid chain; its full sequence is uncharacterized protein (115 aa).

The next 2 membrane-spanning stretches (helical) occupy residues 15 to 35 (FSTQVVCSPSGAALFCFEVLF) and 52 to 72 (FDGVAILLLLILLSLSNYYSI).

It is found in the membrane. This is an uncharacterized protein from Saccharomyces cerevisiae (strain ATCC 204508 / S288c) (Baker's yeast).